Consider the following 142-residue polypeptide: Hemoglobin subunit alpha-2 (142 aa).

The Globin domain occupies 2 to 142; that stretch reads LLTADDKKHI…VSSVLTSKYR (141 aa). Histidine 59 provides a ligand contact to O2. Residue histidine 88 coordinates heme b.

It belongs to the globin family. Heterotetramer of two alpha chains and two beta chains. In terms of tissue distribution, red blood cells.

Its function is as follows. Involved in oxygen transport from the lung to the various peripheral tissues. This chain is Hemoglobin subunit alpha-2 (hba2), found in Xenopus borealis (Kenyan clawed frog).